The sequence spans 238 residues: Cell division protein A (238 aa).

Interacts with CdvB.

It localises to the cytoplasm. Its subcellular location is the nucleoid. The protein resides in the cell membrane. Its function is as follows. Part of a cell division machinery. The CdvA, CdvB and CdvC proteins polymerize between segregating nucleoids and persist throughout cell division, forming a successively smaller structure during constriction. CdvA is a membrane interacting protein that recruits ESCRT-III homologs to the membrane. This chain is Cell division protein A, found in Sulfolobus acidocaldarius (strain ATCC 33909 / DSM 639 / JCM 8929 / NBRC 15157 / NCIMB 11770).